A 520-amino-acid chain; its full sequence is EGF domain-specific O-linked N-acetylglucosamine transferase (520 aa).

The first 16 residues, 1-16, serve as a signal peptide directing secretion; the sequence is MPILPILIGILHLSLA. Residues Asn52, Asn176, and Asn250 are each glycosylated (N-linked (GlcNAc...) asparagine). A Required for optimal activity motif is present at residues 292–294; sequence DVE. Asn479 carries N-linked (GlcNAc...) asparagine glycosylation. Residues 517-520 carry the Prevents secretion from ER motif; it reads RNEL.

Requires a divalent metal cation as cofactor.

It localises to the endoplasmic reticulum lumen. It catalyses the reaction L-seryl-[protein] + UDP-N-acetyl-alpha-D-glucosamine = 3-O-(N-acetyl-beta-D-glucosaminyl)-L-seryl-[protein] + UDP + H(+). The enzyme catalyses L-threonyl-[protein] + UDP-N-acetyl-alpha-D-glucosamine = 3-O-(N-acetyl-beta-D-glucosaminyl)-L-threonyl-[protein] + UDP + H(+). Catalyzes the transfer of a single N-acetylglucosamine from UDP-GlcNAc to a serine or threonine residue in extracellular proteins resulting in their modification with a beta-linked N-acetylglucosamine (O-GlcNAc). Specifically glycosylates the Thr residue located between the fifth and sixth conserved cysteines of folded EGF-like domains. Involved in epithelial cell adhesion/interaction with the extracellular matrix by mediating glycosylation of proteins in the secretory pathway, such as Dumpy (Dp). This chain is EGF domain-specific O-linked N-acetylglucosamine transferase (Eogt), found in Drosophila melanogaster (Fruit fly).